Consider the following 108-residue polypeptide: Replication restart protein PriB (108 aa).

The 101-residue stretch at 8–108 folds into the SSB domain; it reads IDNRFSVMGV…LHAEQIEFID (101 aa).

It belongs to the PriB family. As to quaternary structure, homodimer. Interacts with PriA and DnaT. Component of the replication restart primosome. Primosome assembly occurs via a 'hand-off' mechanism. PriA binds to replication forks, subsequently PriB then DnaT bind; DnaT then displaces ssDNA to generate the helicase loading substrate.

Involved in the restart of stalled replication forks, which reloads the replicative helicase on sites other than the origin of replication; the PriA-PriB pathway is the major replication restart pathway. During primosome assembly it facilitates complex formation between PriA and DnaT on DNA; stabilizes PriA on DNA. Stimulates the DNA unwinding activity of PriA helicase. This chain is Replication restart protein PriB, found in Haemophilus influenzae (strain 86-028NP).